The primary structure comprises 462 residues: Arginine-specific demethylase JMJ20 (462 aa).

The 173-residue stretch at 115–287 folds into the JmjC domain; it reads VKEYPDYTAY…WVWDLLWKDY (173 aa). Fe cation is bound by residues His-177, Asp-179, and His-255.

Belongs to the JARID1 histone demethylase family. The cofactor is Fe(2+). Mostly expressed in leaves, and, to a lower extent, in inflorescences, roots, siliques and stems.

The protein resides in the nucleus. The catalysed reaction is N(omega),N(omega)-dimethyl-L-arginyl-[protein] + 2-oxoglutarate + O2 = N(omega)-methyl-L-arginyl-[protein] + formaldehyde + succinate + CO2. Histone demethylase that demethylates 'Arg-3' (H4R3me) of histone H4 with a specific activity for H4R3me2. Involved in the positive regulation of gene expression. Together with JMJ22, positively regulates seed germination by promoting the removal of repressive histone arginine methylations (e.g. H4R3me2) at GA3ox1 and GA3ox2 to trigger gibberellic acid (GA) biosynthesis. The polypeptide is Arginine-specific demethylase JMJ20 (Arabidopsis thaliana (Mouse-ear cress)).